We begin with the raw amino-acid sequence, 391 residues long: MVTVDEVRKAQRAEGPATVLAIGTATPPNCIDQSTYPDYYFRITNSEHKTELKEKFQRMCDKSMIKKRYMYLTEEILKENPSMCEYMAPSLDARQDMVVVEIPKLGKEAATKAIKEWGQPKSKITHLVFCTTSGVDMPGADYQLTKLLGLRPSVKRLMMYQQGCFAGGTVLRLAKDLAENNRGARVLVVCSEIXAVTFRGPSDTHLDSLVGQALFGDGAAAIIVGADPLPKIERPLFELVSAAQTILPDSDGAIDGHLREVGLTFHLLKDVPGLISKNIEKSLNEAFKPLDITDWNSLFWIAHPGGPAILDQVETKLGLKPEKLEATRHILSEYGNMSSACVLFILDEVRRKSATNGLKTTGEGLEWGVLFGFGPGLTVETVVLHSVGVTA.

The active site involves C164.

This sequence belongs to the thiolase-like superfamily. Chalcone/stilbene synthases family. As to quaternary structure, homodimer. As to expression, expressed in fruits.

The catalysed reaction is (E)-4-coumaroyl-CoA + 3 malonyl-CoA + 3 H(+) = 2',4,4',6'-tetrahydroxychalcone + 3 CO2 + 4 CoA. The protein operates within secondary metabolite biosynthesis; flavonoid biosynthesis. In terms of biological role, polyketide synthase producing naringenin chalcone. Can use p-coumaryl-CoA as substrate. The protein is Polyketide synthase 5 (PKS5) of Rubus idaeus (Raspberry).